The chain runs to 169 residues: MAGKKVKSNTPKQDLSVSKSKLTSIKAPAAAIKAKAAASAVKKGVSNKSTRKVRTSVIFRRPVTLNNPKKPAYPRRSVNKITKMDQFRILKAPLTTESATQKIEGSNTITFMVDMFANKSQVADAVAKMYDVKVKRVNTLITPRGEKKAFVTLSPEFEAADVANKIGLI.

Residues 1 to 20 (MAGKKVKSNTPKQDLSVSKS) form a disordered region. Over residues 8-20 (SNTPKQDLSVSKS) the composition is skewed to polar residues.

This sequence belongs to the universal ribosomal protein uL23 family.

Functionally, this protein binds to a specific region on the 26S rRNA. The sequence is that of Large ribosomal subunit protein uL23 (rpl23a) from Dictyostelium discoideum (Social amoeba).